A 328-amino-acid polypeptide reads, in one-letter code: Formimidoylglutamase (328 aa).

Residues His133, Asp159, His161, Asp163, Asp253, and Asp255 each contribute to the Mn(2+) site.

This sequence belongs to the arginase family. It depends on Mn(2+) as a cofactor.

The enzyme catalyses N-formimidoyl-L-glutamate + H2O = formamide + L-glutamate. It participates in amino-acid degradation; L-histidine degradation into L-glutamate; L-glutamate from N-formimidoyl-L-glutamate (hydrolase route): step 1/1. Catalyzes the conversion of N-formimidoyl-L-glutamate to L-glutamate and formamide. The polypeptide is Formimidoylglutamase (Streptococcus pyogenes serotype M1).